The chain runs to 276 residues: SRR1-like protein (276 aa).

S30 carries the post-translational modification Phosphoserine. The residue at position 34 (Y34) is a Phosphotyrosine.

It belongs to the SRR1 family.

Possible regulator involved in a circadian clock input pathway. The chain is SRR1-like protein from Drosophila melanogaster (Fruit fly).